The following is a 267-amino-acid chain: Tryptophan synthase alpha chain (267 aa).

Residues glutamate 49 and aspartate 60 each act as proton acceptor in the active site.

The protein belongs to the TrpA family. Tetramer of two alpha and two beta chains.

It catalyses the reaction (1S,2R)-1-C-(indol-3-yl)glycerol 3-phosphate + L-serine = D-glyceraldehyde 3-phosphate + L-tryptophan + H2O. Its pathway is amino-acid biosynthesis; L-tryptophan biosynthesis; L-tryptophan from chorismate: step 5/5. The alpha subunit is responsible for the aldol cleavage of indoleglycerol phosphate to indole and glyceraldehyde 3-phosphate. The polypeptide is Tryptophan synthase alpha chain (Cyanothece sp. (strain PCC 7425 / ATCC 29141)).